The sequence spans 111 residues: MDSVLIHVLIDGLVACVAQLIRIADELLQFILQVQEVPYVEENGRAEETEADAPLPEEPSLPDLPDLSDLDSILTPREDEDLIFDIDQAMLDMDNLYEDTVSGINDDLTGD.

Positions 43–72 (NGRAEETEADAPLPEEPSLPDLPDLSDLDS) are disordered. The segment covering 61-72 (LPDLPDLSDLDS) has biased composition (low complexity).

This is an uncharacterized protein from Homo sapiens (Human).